A 520-amino-acid chain; its full sequence is D-aminopeptidase (520 aa).

S62 functions as the Nucleophile in the catalytic mechanism. The Proton donor/acceptor role is filled by K65. Residues 477 to 487 (QRSMDAPSPGE) form an important for specificity region. D481 is a binding site for substrate.

The protein belongs to the peptidase S12 family. Homodimer.

It catalyses the reaction Release of an N-terminal D-amino acid from a peptide, Xaa-|-Yaa-, in which Xaa is preferably D-Ala, D-Ser or D-Thr. D-amino acid amides and methyl esters also are hydrolyzed, as is glycine amide.. Inhibited by beta-lactam compounds such as 6-aminopenicillic acid, 7-aminocephalosporanic acid, benzylpenicillin and ampicillin. Inhibited by p-chloromercuribenzoate. Hydrolyzes N-terminal residues in D-amino acid-containing peptides. This chain is D-aminopeptidase (dap), found in Brucella anthropi (Ochrobactrum anthropi).